Consider the following 157-residue polypeptide: Transcriptional repressor NrdR (157 aa).

Positions Met1–Ser11 are enriched in polar residues. The tract at residues Met1 to Thr21 is disordered. The segment at Cys3–Cys34 is a zinc-finger region. In terms of domain architecture, ATP-cone spans Ile49–Asp139.

The protein belongs to the NrdR family. Zn(2+) serves as cofactor.

Its function is as follows. Negatively regulates transcription of bacterial ribonucleotide reductase nrd genes and operons by binding to NrdR-boxes. The sequence is that of Transcriptional repressor NrdR from Prochlorococcus marinus (strain MIT 9211).